Reading from the N-terminus, the 261-residue chain is Uridine-cytidine kinase 2 (261 aa).

Residues 1–16 show a composition bias toward polar residues; it reads MAGDSEQTLQNHQQPN. The tract at residues 1-24 is disordered; the sequence is MAGDSEQTLQNHQQPNGGEPFLIG. Alanine 2 bears the N-acetylalanine mark. 27 to 35 is an ATP binding site; the sequence is GGTASGKSS. The substrate site is built by aspartate 84, tyrosine 112, histidine 117, arginine 166, arginine 176, and glutamine 184. Residue aspartate 213 participates in ATP binding. The disordered stretch occupies residues 240 to 261; the sequence is GYLNGYTPSRKRQASESSSRPH. Residue serine 254 is modified to Phosphoserine.

It belongs to the uridine kinase family. As to quaternary structure, homotetramer.

The enzyme catalyses uridine + ATP = UMP + ADP + H(+). The catalysed reaction is cytidine + ATP = CMP + ADP + H(+). It participates in pyrimidine metabolism; CTP biosynthesis via salvage pathway; CTP from cytidine: step 1/3. It functions in the pathway pyrimidine metabolism; UMP biosynthesis via salvage pathway; UMP from uridine: step 1/1. In terms of biological role, phosphorylates uridine and cytidine to uridine monophosphate and cytidine monophosphate. Does not phosphorylate deoxyribonucleosides or purine ribonucleosides. Can use ATP or GTP as a phosphate donor. In Mus musculus (Mouse), this protein is Uridine-cytidine kinase 2 (Uck2).